The following is a 494-amino-acid chain: Splicing regulatory glutamine/lysine-rich protein 1 (494 aa).

The 77-residue stretch at 69-145 folds into the RRM domain; sequence RTVYVGNLNS…RPLKINHSNN (77 aa). A phosphoserine mark is found at S174 and S187. Residues 176 to 494 form a disordered region; it reads ISAAIEPESG…ERLCSTADAV (319 aa). The segment covering 183 to 192 has biased composition (basic and acidic residues); it reads ESGKSNERKG. Composition is skewed to basic residues over residues 193–230 and 238–262; these read GRSRSHTRSKSRSSSKSHSRRKRSQSKHRSRSHNRSRS and SKSPHKKRSKSRERRKSRSRSRSRD. Residues 263-340 show a composition bias toward basic and acidic residues; sequence KRKDTREKVK…DRSKEADEKR (78 aa). At T348 the chain carries Phosphothreonine. Residues 357-373 are compositionally biased toward basic residues; the sequence is RRSRSASRERRRRRSRS. 2 stretches are compositionally biased toward basic and acidic residues: residues 404–453 and 463–474; these read REKE…KEAD and KDTARTEEESKA.

Belongs to the splicing factor SR family. In terms of assembly, interacts with SREK1IP1. Homodimer. Binds SFRS1, SFRS2, SFRS3 and SFRS6. Interacts with the spliceosome. In terms of tissue distribution, ubiquitous. Detected in liver, brain, lung, spleen, testis and pancreas.

The protein localises to the nucleus. In terms of biological role, participates in the regulation of alternative splicing by modulating the activity of other splice facors. Inhibits the splicing activity of SFRS1, SFRS2 and SFRS6. Augments the splicing activity of SFRS3. This chain is Splicing regulatory glutamine/lysine-rich protein 1 (Srek1), found in Rattus norvegicus (Rat).